Reading from the N-terminus, the 1173-residue chain is 3-hydroxy-3-methylglutaryl coenzyme A reductase mlcD (1173 aa).

Residues Asn143 and Asn186 are each glycosylated (N-linked (GlcNAc...) asparagine). Residues 241–420 (DVVVMVLGYI…FTFYTAILSI (180 aa)) enclose the SSD domain. 7 helical membrane passes run 242–262 (VVVM…LFLS), 272–292 (LATS…DVAI), 302–322 (LLSE…SITL), 368–388 (NIVC…VLGI), 397–417 (VLAA…YTAI), 479–499 (FWMV…TLFQ), and 594–614 (VLSK…SYLF). Residues 498–673 (FQASSSGSLS…FTPTTTDSDS (176 aa)) form a linker region. Polar residues predominate over residues 647–666 (NQTPQIQSSLQAPQTRVFTP). The tract at residues 647–669 (NQTPQIQSSLQAPQTRVFTPTTT) is disordered. The tract at residues 674-1133 (DASLVLIKAS…LVKAHMAHNR (460 aa)) is catalytic. The Charge relay system role is filled by Glu822. Asn886 carries N-linked (GlcNAc...) asparagine glycosylation. The Charge relay system role is filled by Lys956. An N-linked (GlcNAc...) asparagine glycan is attached at Asn997. Asp1032 serves as the catalytic Charge relay system. Residue His1128 is the Proton donor of the active site. An N-linked (GlcNAc...) asparagine glycan is attached at Asn1132. The segment at 1132 to 1173 (NRSAPASSAPSRSVSPSGGTRTVPVPNNALRPSAAATDRARR) is disordered. Residues 1133–1148 (RSAPASSAPSRSVSPS) show a composition bias toward low complexity.

The protein belongs to the HMG-CoA reductase family.

The protein localises to the endoplasmic reticulum membrane. The catalysed reaction is (R)-mevalonate + 2 NADP(+) + CoA = (3S)-3-hydroxy-3-methylglutaryl-CoA + 2 NADPH + 2 H(+). It functions in the pathway polyketide biosynthesis. Functionally, HMG-CoA reductase; part of the gene cluster that mediates the biosynthesis of compactin, also known as mevastatin or ML-236B, and which acts as a potent competitive inhibitor of HMG-CoA reductase. Compactin biosynthesis is performed in two stages. The first stage is catalyzed by the nonaketide synthase mlcA, which belongs to type I polyketide synthases and catalyzes the iterative nine-step formation of the polyketide. This PKS stage is completed by the action of dehydrogenase mlcG, which catalyzes the NADPH-dependent reduction of the unsaturated tetra-, penta- and heptaketide intermediates that arise during the mlcA-mediated biosynthesis of the nonaketide chain and leads to dihydro-ML-236C carboxylate. Covalently bound dihydro-ML-236C carboxylate is released from mlcA by the mlcF esterase. Conversion of dihydro-ML-236C carboxylate into ML-236A carboxylate is subsequently performed with the participation of molecular oxygen and P450 monoogygenase mlcC. Finally, mlcH performs the conversion of ML-236A carboxylate to ML-236B/compactin carboxylate through the addition of the side-chain diketide moiety produced by the diketide synthase mlcB. HMG-CoA reductase mlcD may act as a down-regulator of compactin production and is involved in conferring resistance to ML-236B/compactin. The polypeptide is 3-hydroxy-3-methylglutaryl coenzyme A reductase mlcD (Penicillium citrinum).